The chain runs to 539 residues: Gamma-2-syntrophin (539 aa).

Residues 73–156 (TVTLRRQPVG…EVTITVEYLR (84 aa)) form the PDZ domain. Low complexity-rich tracts occupy residues 168 to 183 (SPGP…SSPL) and 194 to 205 (SSTTAPSSPSSP). Positions 168-209 (SPGPSSDHSSGASSPLFDSGLHLNGNSSTTAPSSPSSPIAKD) are disordered. The region spanning 296 to 421 (QVVHMGWVNE…WEKSFQRATF (126 aa)) is the PH domain.

Belongs to the syntrophin family. As to quaternary structure, interacts with the dystrophin protein DMD and related proteins DTNA and DTNB. As to expression, widely expressed. Strong expression in brain and testis. In CNS, it is expressed in the perikaryon and proximal portion of the neuronal processes. Strong expression in the hippocampus, neuron-rich dendate granule cells, and pyramidal cell layers. Highly expressed in neurons of the cerebral cortex. Also expressed in the cerebellar cortex, deep cerebellar nuclei, thalamus, and basal ganglia.

It is found in the cell membrane. It localises to the sarcolemma. The protein resides in the cytoplasm. Its subcellular location is the cytoskeleton. Adapter protein that binds to and probably organizes the subcellular localization of a variety of proteins. May link various receptors to the actin cytoskeleton and the dystrophin glycoprotein complex. This chain is Gamma-2-syntrophin (SNTG2), found in Homo sapiens (Human).